Reading from the N-terminus, the 81-residue chain is ATP synthase subunit c (81 aa).

Transmembrane regions (helical) follow at residues 7–27 (FVAL…CIGI) and 53–73 (FLLA…AMMF).

This sequence belongs to the ATPase C chain family. In terms of assembly, F-type ATPases have 2 components, F(1) - the catalytic core - and F(0) - the membrane proton channel. F(1) has five subunits: alpha(3), beta(3), gamma(1), delta(1), epsilon(1). F(0) has three main subunits: a(1), b(2) and c(10-14). The alpha and beta chains form an alternating ring which encloses part of the gamma chain. F(1) is attached to F(0) by a central stalk formed by the gamma and epsilon chains, while a peripheral stalk is formed by the delta and b chains.

It localises to the cell inner membrane. Functionally, f(1)F(0) ATP synthase produces ATP from ADP in the presence of a proton or sodium gradient. F-type ATPases consist of two structural domains, F(1) containing the extramembraneous catalytic core and F(0) containing the membrane proton channel, linked together by a central stalk and a peripheral stalk. During catalysis, ATP synthesis in the catalytic domain of F(1) is coupled via a rotary mechanism of the central stalk subunits to proton translocation. Its function is as follows. Key component of the F(0) channel; it plays a direct role in translocation across the membrane. A homomeric c-ring of between 10-14 subunits forms the central stalk rotor element with the F(1) delta and epsilon subunits. The protein is ATP synthase subunit c of Azoarcus sp. (strain BH72).